The primary structure comprises 98 residues: Integration host factor subunit alpha (98 aa).

A disordered region spans residues 49 to 70 (FGNFDLRDKNQRPGRNPKTGED).

It belongs to the bacterial histone-like protein family. As to quaternary structure, heterodimer of an alpha and a beta chain.

Its function is as follows. This protein is one of the two subunits of integration host factor, a specific DNA-binding protein that functions in genetic recombination as well as in transcriptional and translational control. This Sodalis glossinidius (strain morsitans) protein is Integration host factor subunit alpha.